A 537-amino-acid chain; its full sequence is MSEIRWSKLHSLIHDAPSDSGEYITIIDSLNDLIKETTIEDRRNEIASSKDIFFQLRESAILGKSVDLKQACSSQYMRIVKGIVIIARNLSVANQVIPQNILLPNTFLAWYLSISRQTVCTPGDLKQLYGLVCQFYFNCTRTNVVFDESCFDDHMNFMVEMLRFIDDDGIVNAYSLWLSNIMKSDAFISSLLNDIRSLEVIDKLLLRGIIAQKTEIDLLVEEEDEDKNLSSLATIQLKILKQLVTHECFGSYMKTLRKEYGFASFNKMFKIVTMLVTSSERWDLYQLTAILSWTFDIFEEYTYLVDAFFKSESTPEATDAGPLFAILSSVLDILTTLAKYQHAQKYMISYDGVHKIIKLFDILERNCLKIHFNKSSGAKNVDSSAHPVRATDHVGNVITDAVILKKRIHNNRINDSNFPGIKCFLVELLGFMSYEQKDVQDSVRELHGLELVLSNCIIDDNNPFIKERCIICIRYLLANNSTNQEFISQLEAKKAVDGDVLKKAGYKVDIDGKGNIKLTADKRNAASEEQLFEDVQK.

This sequence belongs to the ataxin-10 family.

It is found in the cytoplasm. Functionally, may play a role in the regulation of cytokinesis. The polypeptide is Ataxin-10 homolog (CTR86) (Kluyveromyces lactis (strain ATCC 8585 / CBS 2359 / DSM 70799 / NBRC 1267 / NRRL Y-1140 / WM37) (Yeast)).